Reading from the N-terminus, the 349-residue chain is tRNA pseudouridine synthase D (349 aa).

A substrate-binding site is contributed by phenylalanine 27. The Nucleophile role is filled by aspartate 80. Substrate is bound at residue asparagine 129. Positions 155 to 303 (GVPNYFGPQR…VEAARRAMLL (149 aa)) constitute a TRUD domain. Phenylalanine 329 is a substrate binding site.

This sequence belongs to the pseudouridine synthase TruD family.

It catalyses the reaction uridine(13) in tRNA = pseudouridine(13) in tRNA. Its function is as follows. Responsible for synthesis of pseudouridine from uracil-13 in transfer RNAs. This Cronobacter sakazakii (strain ATCC BAA-894) (Enterobacter sakazakii) protein is tRNA pseudouridine synthase D.